The chain runs to 793 residues: E3 UFM1-protein ligase 1 (793 aa).

Ala2 is modified (N-acetylalanine). The interval 2-200 is mediates interaction with DDRGK1; that stretch reads ADAWEEIRRL…RGLFSAITRP (199 aa). A required for E3 UFM1-protein ligase activity region spans residues 2–212; the sequence is ADAWEEIRRL…VNSLISKYGF (211 aa). The involved in CDK5RAP3-binding stretch occupies residues 121-250; it reads DRLAEEVNDK…KAVFVPDIYS (130 aa). The interval 200-400 is mediates interaction with TRIP4; the sequence is PTAVNSLISK…NPVHLITEED (201 aa). Residues 407–473 form a disordered region; it reads LESVSTSKKD…SSHTGKKKPE (67 aa). At Arg433 the chain carries Omega-N-methylarginine. Phosphoserine is present on Ser458. Residues 490 to 684 are mediates interaction with CDK5RAP3; that stretch reads IQDAPEEFIS…QLKVTEDPAL (195 aa). Residue Thr536 is modified to Phosphothreonine.

This sequence belongs to the UFL1 family. In terms of assembly, catalytic component of the UFM1 ribosome E3 ligase (UREL) complex, composed of UFL1, DDRGK1 and CDK5RAP3. Interacts with E2-like enzyme UFC1. Interacts with RELA. Interacts with NBN; promoting recruitment to double-strand breaks following DNA damage. Interacts (when phosphorylated) with YWHAG/14-3-3-gamma; sequestering UFL1 and preventing its association with PDCD1/PD-1 substrate. Post-translationally, ubiquitinated, leading to its degradation by the proteasome. Interaction with CDK5RAP3 protects both proteins against ubiquitination and degradation via the proteasome. In terms of processing, phosphorylation at Thr-536 by AMPK promotes its interaction with YWHAG/14-3-3-gamma, thereby preventing UFL1 association with PDCD1/PD-1 substrate.

Its subcellular location is the endoplasmic reticulum membrane. The protein localises to the cytoplasm. It is found in the cytosol. The protein resides in the nucleus. It localises to the chromosome. E3 protein ligase that mediates ufmylation, the covalent attachment of the ubiquitin-like modifier UFM1 to lysine residues on target proteins, and which plays a key role in various processes, such as ribosome recycling, response to DNA damage, interferon response or reticulophagy (also called ER-phagy). Catalyzes ufmylation of many protein, such as CD274/PD-L1, CDK5RAP3, CYB5R3, DDRGK1, EIF6, histone H4, MRE11, P4HB, PDCD1/PD-1, TRIP4, RPN1, RPS20/uS10, RPL10/uL16, RPL26/uL24, SYVN1/HRD1 and TP53/p53. As part of the UREL complex, plays a key role in ribosome recycling by catalyzing mono-ufmylation of RPL26/uL24 subunit of the 60S ribosome. Ufmylation of RPL26/uL24 occurs on free 60S ribosomes following ribosome dissociation: it weakens the junction between post-termination 60S subunits and SEC61 translocons, promoting release and recycling of the large ribosomal subunit from the endoplasmic reticulum membrane. Ufmylation of RPL26/uL24 and subsequent 60S ribosome recycling either take place after normal termination of translation or after ribosome stalling during cotranslational translocation at the endoplasmic reticulum. Involved in reticulophagy in response to endoplasmic reticulum stress by mediating ufmylation of proteins such as CYB5R3 and RPN1, thereby promoting lysosomal degradation of ufmylated proteins. Ufmylation in response to endoplasmic reticulum stress is essential for processes such as hematopoiesis, blood vessel morphogenesis or inflammatory response. Mediates ufmylation of DDRGK1 and CDK5RAP3; the role of these modifications is however unclear: as both DDRGK1 and CDK5RAP3 act as substrate adapters for ufmylation, it is uncertain whether ufmylation of these proteins is, a collateral effect or is required for ufmylation. Acts as a negative regulator of T-cell activation by mediating ufmylation and stabilization of PDCD1/PD-1. Also involved in the response to DNA damage: recruited to double-strand break sites following DNA damage and mediates monoufmylation of histone H4 and ufmylation of MRE11. Mediates ufmylation of TP53/p53, promoting its stability. Catalyzes ufmylation of TRIP4, thereby playing a role in nuclear receptor-mediated transcription. Required for hematopoietic stem cell function and hematopoiesis. This is E3 UFM1-protein ligase 1 from Macaca fascicularis (Crab-eating macaque).